A 159-amino-acid polypeptide reads, in one-letter code: Aphid transmission protein (159 aa).

This sequence belongs to the caulimoviridae ORF II family.

This protein is involved in virus transmission. The protein is Aphid transmission protein of Cauliflower mosaic virus (strain NY8153) (CaMV).